The sequence spans 303 residues: Quinolinate synthase (303 aa).

Iminosuccinate is bound by residues histidine 23 and serine 40. Cysteine 85 contributes to the [4Fe-4S] cluster binding site. Iminosuccinate contacts are provided by residues 111 to 113 (YIN) and serine 128. A [4Fe-4S] cluster-binding site is contributed by cysteine 171. Iminosuccinate-binding positions include 197 to 199 (HPE) and threonine 214. A [4Fe-4S] cluster-binding site is contributed by cysteine 259.

Belongs to the quinolinate synthase family. Type 2 subfamily. [4Fe-4S] cluster is required as a cofactor.

It is found in the cytoplasm. It catalyses the reaction iminosuccinate + dihydroxyacetone phosphate = quinolinate + phosphate + 2 H2O + H(+). Its pathway is cofactor biosynthesis; NAD(+) biosynthesis; quinolinate from iminoaspartate: step 1/1. Its function is as follows. Catalyzes the condensation of iminoaspartate with dihydroxyacetone phosphate to form quinolinate. This Clostridium acetobutylicum (strain ATCC 824 / DSM 792 / JCM 1419 / IAM 19013 / LMG 5710 / NBRC 13948 / NRRL B-527 / VKM B-1787 / 2291 / W) protein is Quinolinate synthase.